Consider the following 455-residue polypeptide: Membrane protein Pbs54 (455 aa).

A helical transmembrane segment spans residues 12-32 (IISIIILILRISLFSCAEHLF). N-linked (GlcNAc...) asparagine glycosylation is found at asparagine 41, asparagine 102, and asparagine 125. 6 consecutive transmembrane segments (helical) span residues 181–201 (IFLI…LFNG), 220–240 (FIFF…LSCI), 244–264 (ILTF…FYLF), 285–305 (ILIG…IIFI), 312–332 (FLVK…IFFL), and 346–366 (FVFS…FWNI). The N-linked (GlcNAc...) asparagine glycan is linked to asparagine 373. Residues 398-418 (NMFALFMIFAMSILSIIFPRI) form a helical membrane-spanning segment.

It localises to the cell projection. The protein localises to the cilium. Its subcellular location is the flagellum. It is found in the cell membrane. Its function is as follows. Plays a role in gamete fertilization. Required for the successful transmission of parasites to mosquito. In Plasmodium berghei (strain Anka), this protein is Membrane protein Pbs54.